The primary structure comprises 257 residues: tRNA pseudouridine synthase A (257 aa).

Asp53 serves as the catalytic Nucleophile. Tyr111 lines the substrate pocket.

It belongs to the tRNA pseudouridine synthase TruA family. Homodimer.

It carries out the reaction uridine(38/39/40) in tRNA = pseudouridine(38/39/40) in tRNA. Functionally, formation of pseudouridine at positions 38, 39 and 40 in the anticodon stem and loop of transfer RNAs. This chain is tRNA pseudouridine synthase A, found in Xanthomonas campestris pv. campestris (strain 8004).